A 189-amino-acid chain; its full sequence is dCTP deaminase (189 aa).

Residues 112–117, 136–138, Q157, Y171, and Q181 contribute to the dCTP site; these read KSTYAR and TLE. The Proton donor/acceptor role is filled by E138.

This sequence belongs to the dCTP deaminase family. In terms of assembly, homotrimer.

The catalysed reaction is dCTP + H2O + H(+) = dUTP + NH4(+). It functions in the pathway pyrimidine metabolism; dUMP biosynthesis; dUMP from dCTP (dUTP route): step 1/2. In terms of biological role, catalyzes the deamination of dCTP to dUTP. The chain is dCTP deaminase from Alcanivorax borkumensis (strain ATCC 700651 / DSM 11573 / NCIMB 13689 / SK2).